A 411-amino-acid polypeptide reads, in one-letter code: Trigger factor (411 aa).

Residues 162 to 240 (EDLVVIDYTT…IKEVKRRQNI (79 aa)) form the PPIase FKBP-type domain.

This sequence belongs to the FKBP-type PPIase family. Tig subfamily.

It is found in the cytoplasm. The enzyme catalyses [protein]-peptidylproline (omega=180) = [protein]-peptidylproline (omega=0). Involved in protein export. Acts as a chaperone by maintaining the newly synthesized protein in an open conformation. Functions as a peptidyl-prolyl cis-trans isomerase. This chain is Trigger factor, found in Thermodesulfovibrio yellowstonii (strain ATCC 51303 / DSM 11347 / YP87).